Reading from the N-terminus, the 99-residue chain is MICOS complex subunit MIC10 (99 aa).

2 consecutive transmembrane segments (helical) span residues 27–43 (RFVY…LLFF) and 50–66 (WASI…SAYT).

Belongs to the MICOS complex subunit Mic10 family. Component of the mitochondrial contact site and cristae organizing system (MICOS) complex. The MICOS complex associates with mitochondrial outer membrane proteins. Present in a large lipid-enriched complex called mitochondrial transmembrane lipoprotein (MTL) complex made of proteins located in the two mitochondrial membranes, including the TOM complex and the core components of the MICOS complex and containing at least digalactosyldiacylglycerol (DGDG).

It localises to the mitochondrion inner membrane. Its function is as follows. Component of the MICOS complex, a large protein complex of the mitochondrial inner membrane that plays crucial roles in the maintenance of crista junctions, inner membrane architecture, and formation of contact sites to the outer membrane. This chain is MICOS complex subunit MIC10, found in Arabidopsis thaliana (Mouse-ear cress).